The following is a 210-amino-acid chain: Small ribosomal subunit protein uS5 (210 aa).

A compositionally biased stretch (basic and acidic residues) spans 1 to 23 (MARTPSSDRPERGRGGERGDRPN). The disordered stretch occupies residues 1–40 (MARTPSSDRPERGRGGERGDRPNRGRGGAEQTPREREESE). The region spanning 41-104 (FVDKLVHINR…EQAKRNMIKI (64 aa)) is the S5 DRBM domain.

The protein belongs to the universal ribosomal protein uS5 family. Part of the 30S ribosomal subunit. Contacts proteins S4 and S8.

Its function is as follows. With S4 and S12 plays an important role in translational accuracy. Located at the back of the 30S subunit body where it stabilizes the conformation of the head with respect to the body. The chain is Small ribosomal subunit protein uS5 from Paramagnetospirillum magneticum (strain ATCC 700264 / AMB-1) (Magnetospirillum magneticum).